Consider the following 463-residue polypeptide: Glutamate--tRNA ligase 2 (463 aa).

A 'HIGH' region motif is present at residues 10-20 (PSPTGFLHIGS). A 'KMSKS' region motif is present at residues 239-243 (KLSKR). An ATP-binding site is contributed by K242.

It belongs to the class-I aminoacyl-tRNA synthetase family. Glutamate--tRNA ligase type 1 subfamily. Monomer.

The protein resides in the cytoplasm. It carries out the reaction tRNA(Glu) + L-glutamate + ATP = L-glutamyl-tRNA(Glu) + AMP + diphosphate. Functionally, catalyzes the attachment of glutamate to tRNA(Glu) in a two-step reaction: glutamate is first activated by ATP to form Glu-AMP and then transferred to the acceptor end of tRNA(Glu). The sequence is that of Glutamate--tRNA ligase 2 from Rickettsia felis (strain ATCC VR-1525 / URRWXCal2) (Rickettsia azadi).